We begin with the raw amino-acid sequence, 270 residues long: Putative pyruvate, phosphate dikinase regulatory protein (270 aa).

151–158 (GVSRTSKT) provides a ligand contact to ADP.

The protein belongs to the pyruvate, phosphate/water dikinase regulatory protein family. PDRP subfamily.

It carries out the reaction N(tele)-phospho-L-histidyl/L-threonyl-[pyruvate, phosphate dikinase] + ADP = N(tele)-phospho-L-histidyl/O-phospho-L-threonyl-[pyruvate, phosphate dikinase] + AMP + H(+). The catalysed reaction is N(tele)-phospho-L-histidyl/O-phospho-L-threonyl-[pyruvate, phosphate dikinase] + phosphate + H(+) = N(tele)-phospho-L-histidyl/L-threonyl-[pyruvate, phosphate dikinase] + diphosphate. Bifunctional serine/threonine kinase and phosphorylase involved in the regulation of the pyruvate, phosphate dikinase (PPDK) by catalyzing its phosphorylation/dephosphorylation. The chain is Putative pyruvate, phosphate dikinase regulatory protein from Ligilactobacillus salivarius (strain UCC118) (Lactobacillus salivarius).